Consider the following 180-residue polypeptide: HTH-type transcriptional regulator EcpR (180 aa).

In terms of domain architecture, HTH luxR-type spans 122 to 180 (KDIKKDKITDREMKIIRMTAQGMQPKSIARIENCSVKTVYTHRRNAEAKLYSKIYKLVQ). Positions 146–165 (PKSIARIENCSVKTVYTHRR) form a DNA-binding region, H-T-H motif.

It belongs to the EcpR/MatA family.

The protein localises to the cytoplasm. Its function is as follows. Part of the ecpRABCDE operon, which encodes the E.coli common pilus (ECP). ECP plays a dual role in early-stage biofilm development and host cell recognition. Positively regulates the expression of the ecp operon. The polypeptide is HTH-type transcriptional regulator EcpR (ecpR) (Klebsiella pneumoniae subsp. pneumoniae (strain ATCC 700721 / MGH 78578)).